A 277-amino-acid chain; its full sequence is Radial spoke head protein 9 homolog (277 aa).

This sequence belongs to the flagellar radial spoke RSP9 family. Component of axonemal radial spoke complexes.

The protein localises to the cytoplasm. It is found in the cytoskeleton. The protein resides in the cilium axoneme. It localises to the flagellum axoneme. Its subcellular location is the cell projection. The protein localises to the kinocilium. Functions as part of axonemal radial spoke complexes that play an important part in the motility of sperm and cilia. Essential for both the radial spoke head assembly and the central pair microtubule stability in ependymal motile cilia. Required for motility of olfactory and neural cilia and for the structural integrity of ciliary axonemes in both 9+0 and 9+2 motile cilia. The sequence is that of Radial spoke head protein 9 homolog (rsph9) from Xenopus tropicalis (Western clawed frog).